Reading from the N-terminus, the 437-residue chain is Protein farnesyltransferase subunit beta (437 aa).

PFTB repeat units follow at residues 123–164 (ATDV…CIIG), 174–215 (REKL…SLTN), 222–263 (FEGT…VILK), 270–312 (LKSL…PLLH), and 332–374 (QQAL…SIAQ). (2E,6E)-farnesyl diphosphate is bound by residues 248 to 251 (HGGY) and 291 to 294 (RCNK). Residues aspartate 297 and cysteine 299 each coordinate Zn(2+). 300–303 (YSFW) serves as a coordination point for (2E,6E)-farnesyl diphosphate. Histidine 362 contacts Zn(2+). Serine 432 is modified (phosphoserine). Threonine 436 carries the post-translational modification Phosphothreonine.

Belongs to the protein prenyltransferase subunit beta family. Heterodimer of FNTA and FNTB. It depends on Zn(2+) as a cofactor.

The enzyme catalyses L-cysteinyl-[protein] + (2E,6E)-farnesyl diphosphate = S-(2E,6E)-farnesyl-L-cysteinyl-[protein] + diphosphate. In terms of biological role, essential subunit of the farnesyltransferase complex. Catalyzes the transfer of a farnesyl moiety from farnesyl diphosphate to a cysteine at the fourth position from the C-terminus of several proteins having the C-terminal sequence Cys-aliphatic-aliphatic-X. In Rattus norvegicus (Rat), this protein is Protein farnesyltransferase subunit beta (Fntb).